The primary structure comprises 396 residues: 1-deoxy-D-xylulose 5-phosphate reductoisomerase (396 aa).

NADPH-binding residues include T15, G16, S17, I18, G41, and N129. Position 130 (K130) interacts with 1-deoxy-D-xylulose 5-phosphate. An NADPH-binding site is contributed by E131. D155 provides a ligand contact to Mn(2+). Residues S156, E157, S182, and H205 each coordinate 1-deoxy-D-xylulose 5-phosphate. E157 provides a ligand contact to Mn(2+). G211 provides a ligand contact to NADPH. S218, N223, K224, and E227 together coordinate 1-deoxy-D-xylulose 5-phosphate. Residue E227 participates in Mn(2+) binding.

This sequence belongs to the DXR family. The cofactor is Mg(2+). Mn(2+) serves as cofactor.

The enzyme catalyses 2-C-methyl-D-erythritol 4-phosphate + NADP(+) = 1-deoxy-D-xylulose 5-phosphate + NADPH + H(+). It participates in isoprenoid biosynthesis; isopentenyl diphosphate biosynthesis via DXP pathway; isopentenyl diphosphate from 1-deoxy-D-xylulose 5-phosphate: step 1/6. Its function is as follows. Catalyzes the NADPH-dependent rearrangement and reduction of 1-deoxy-D-xylulose-5-phosphate (DXP) to 2-C-methyl-D-erythritol 4-phosphate (MEP). The sequence is that of 1-deoxy-D-xylulose 5-phosphate reductoisomerase from Xanthomonas axonopodis pv. citri (strain 306).